The primary structure comprises 294 residues: MINKIFALPVIEQLTPVLSRRQLDDLDLIVVDHPQVKASFALQGAHLLSWKPVGEEEVLWLSNNTPFKTGVALRGGVPICWPWFGPAAQQGLPSHGFARNLPWALKAHNEDDNGVMLTFELQSSEATRKYWPHDFTLLARFKVGKTCEIELEAHGEFATTSALHSYFNVGDIANVKVSGLGDRFIDKVNDAKEGVLTDGIQTFPDRTDRVYLNPEACSVIHDATLNRTIDVVHHHHLNVVGWNPGPALSVSMGDMPDDGYKTFVCVETVYATAPQQATEEKPSRLAQTICVAKR.

Arg74 and Arg99 together coordinate substrate. Residue His164 is part of the active site. Asp208 is a substrate binding site. Glu267 is a catalytic residue.

Belongs to the glucose-6-phosphate 1-epimerase family. As to quaternary structure, monomer in solution.

The enzyme catalyses alpha-D-glucose 6-phosphate = beta-D-glucose 6-phosphate. Probably functions as a hexose-6-phosphate 1-epimerase. This is Putative glucose-6-phosphate 1-epimerase from Salmonella typhimurium (strain LT2 / SGSC1412 / ATCC 700720).